We begin with the raw amino-acid sequence, 246 residues long: Putative outer membrane protein YiaT (246 aa).

The first 21 residues, 1–21 (MLINRNIVALFALPFMASATA), serve as a signal peptide directing secretion.

Belongs to the MipA/OmpV family.

The protein localises to the cell outer membrane. In Escherichia coli (strain K12), this protein is Putative outer membrane protein YiaT (yiaT).